The sequence spans 146 residues: MAALRLLLGIDYGTKQIGVAVGQAITGQARELCTLKAQNGVPDWDKVQALINEWKPDAIVVGLPLNMDGTPSDMSARAEKFSRKLNGRFGVTVYTHDERLTTFEAKGERMARGGQKGSYRNNPVDAIAAALLLQGWLDEHPELLNV.

Belongs to the YqgF nuclease family.

Its subcellular location is the cytoplasm. Its function is as follows. Could be a nuclease involved in processing of the 5'-end of pre-16S rRNA. The polypeptide is Putative pre-16S rRNA nuclease (Pseudomonas savastanoi pv. phaseolicola (strain 1448A / Race 6) (Pseudomonas syringae pv. phaseolicola (strain 1448A / Race 6))).